A 162-amino-acid chain; its full sequence is Fibroblast growth factor 22 (162 aa).

A signal peptide spans 1–22 (MRSRLWLGLAWLLLARAPGAPG).

It belongs to the heparin-binding growth factors family. In terms of assembly, interacts with FGFR1 and FGFR2. Interacts with FGFBP1. Preferentially expressed in skin; low expression in brain. Expressed in the inner root sheath of the hair follicle.

It is found in the secreted. Functionally, plays a role in the fasting response, glucose homeostasis, lipolysis and lipogenesis. Can stimulate cell proliferation (in vitro). May be involved in hair development. The chain is Fibroblast growth factor 22 (Fgf22) from Mus musculus (Mouse).